Reading from the N-terminus, the 295-residue chain is 5,10-methylenetetrahydrofolate reductase (295 aa).

The active-site Proton donor/acceptor is the glutamate 28. Position 59 (threonine 59) interacts with NADH. Residues histidine 89, arginine 119, glycine 120, aspartate 121, alanine 133, tyrosine 153, histidine 157, alanine 160, aspartate 166, asparagine 169, arginine 172, and lysine 173 each contribute to the FAD site. Aspartate 121 lines the (6S)-5-methyl-5,6,7,8-tetrahydrofolate pocket. Glutamine 184 contributes to the NADH binding site. The (6S)-5-methyl-5,6,7,8-tetrahydrofolate site is built by glutamine 184, glutamine 220, and lysine 280.

The protein belongs to the methylenetetrahydrofolate reductase family. It depends on FAD as a cofactor.

It catalyses the reaction (6S)-5-methyl-5,6,7,8-tetrahydrofolate + NAD(+) = (6R)-5,10-methylene-5,6,7,8-tetrahydrofolate + NADH + H(+). The protein operates within one-carbon metabolism; tetrahydrofolate interconversion. Its pathway is amino-acid biosynthesis; L-methionine biosynthesis via de novo pathway. Catalyzes the NADH-dependent reduction of 5,10-methylenetetrahydrofolate to 5-methyltetrahydrofolate. Is required to provide the methyl group necessary for methionine synthetase to convert homocysteine to methionine; the methyl group is given by 5-methyltetrahydrofolate. The chain is 5,10-methylenetetrahydrofolate reductase (metF) from Buchnera aphidicola subsp. Baizongia pistaciae (strain Bp).